A 106-amino-acid polypeptide reads, in one-letter code: MAGGDIKKGANLFKTRCAQCHTVEKDGGNKIGPALHGLWGRKTGSVEGYSYTDANKQKGIEWNDDTLFEYLENPKKYIPGTKMAFGGLKKAKDRNDLIAYLKDSTK.

3 residues coordinate heme c: Cys-17, Cys-20, and His-21. Lys-75 carries the post-translational modification N6,N6,N6-trimethyllysine. Heme c is bound at residue Met-83.

It belongs to the cytochrome c family. In terms of processing, binds 1 heme c group covalently per subunit.

The protein resides in the mitochondrion intermembrane space. Electron carrier protein. The oxidized form of the cytochrome c heme group can accept an electron from the heme group of the cytochrome c1 subunit of cytochrome reductase. Cytochrome c then transfers this electron to the cytochrome oxidase complex, the final protein carrier in the mitochondrial electron-transport chain. The chain is Cytochrome c (CYC1) from Gibberella zeae (strain ATCC MYA-4620 / CBS 123657 / FGSC 9075 / NRRL 31084 / PH-1) (Wheat head blight fungus).